Consider the following 245-residue polypeptide: MRYKITVEYNGSNFSGWQKQQHSANSIQEKIENAIFNFSGEKVTLYCGGRTDAGVHALGQVAHFDMEKEFELYRIRNAINYHLKSIPIVVLNAEVVDDAFHARFSAKKRYYEYRIVNRYAPAALETGYVWQVFSPLDVNIMREAAKHLLGKHDLSSFRSKDCQAANPIRTIDDIDIIQNGNHIHIKISAISFLHNQVRIIVGTLVEFGKNRTNPQEMLNILNQCKRSAAGVTAPPFGLYLVKIDY.

Aspartate 52 acts as the Nucleophile in catalysis. Substrate is bound at residue tyrosine 111.

It belongs to the tRNA pseudouridine synthase TruA family. Homodimer.

The enzyme catalyses uridine(38/39/40) in tRNA = pseudouridine(38/39/40) in tRNA. Its function is as follows. Formation of pseudouridine at positions 38, 39 and 40 in the anticodon stem and loop of transfer RNAs. In Wolbachia pipientis wMel, this protein is tRNA pseudouridine synthase A.